The primary structure comprises 603 residues: Bud site selection protein 8 (603 aa).

The segment covering 1–10 (MIQSDEDNLD) has biased composition (acidic residues). 3 disordered regions span residues 1 to 25 (MIQS…GTSS), 83 to 150 (ASTS…SPSS), and 190 to 212 (ANRG…EPNE). The Extracellular segment spans residues 1 to 515 (MIQSDEDNLD…GFRDVYSIEN (515 aa)). Composition is skewed to low complexity over residues 11–25 (SSET…GTSS) and 84–95 (STSSSSSSNSSS). N-linked (GlcNAc...) asparagine glycosylation is found at N92, N110, N211, N240, N271, and N333. The span at 96-115 (ITQFHDTQDNNIPSNTTVRP) shows a compositional bias: polar residues. The tract at residues 286 to 479 (AGSIKSSTSD…NRKEDRHDAE (194 aa)) is disordered. Over residues 325-335 (PSHNSDSSNES) the composition is skewed to low complexity. A compositionally biased stretch (basic and acidic residues) spans 336-350 (SPKDHIGHNNEEKFS). 2 N-linked (GlcNAc...) asparagine glycosylation sites follow: N396 and N423. The span at 439-452 (KSQSSESDTGQNSI) shows a compositional bias: polar residues. The segment covering 463 to 479 (KQQEKTDNRKEDRHDAE) has biased composition (basic and acidic residues). The helical transmembrane segment at 516–536 (IIVILLCCSIVPPLFFIIGCS) threads the bilayer. The Cytoplasmic segment spans residues 537-577 (SRRKLVSDYRLMRLLMNKEHRAALLQGFIWDVDLRWFRMFC). A helical transmembrane segment spans residues 578-598 (LILGAAETVIVMAGIAIGFGV). Residues 599 to 603 (GITRE) are Extracellular-facing.

Belongs to the BUD8/9 family. Interacts with RAX1 RAX2 at the proximal or distal pole in unbudded cells. N- and O-glycosylated.

The protein localises to the cell membrane. It is found in the bud tip. Involved in positioning the distal bud pole signal. This is Bud site selection protein 8 from Saccharomyces cerevisiae (strain ATCC 204508 / S288c) (Baker's yeast).